The sequence spans 241 residues: Dihydropteridine reductase (241 aa).

Position 11–35 (11–35) interacts with NADP(+); that stretch reads LVYGGRGALGSRCVQAFRARNWWVA. N6-succinyllysine is present on residues lysine 70, lysine 76, lysine 93, and lysine 99. Residue tyrosine 147 is the Proton acceptor of the active site. Serine 170 is subject to Phosphoserine.

This sequence belongs to the short-chain dehydrogenases/reductases (SDR) family. As to quaternary structure, homodimer.

It carries out the reaction 5,6,7,8-tetrahydropteridine + NAD(+) = 6,7-dihydropteridine + NADH + H(+). It catalyses the reaction 5,6,7,8-tetrahydropteridine + NADP(+) = 6,7-dihydropteridine + NADPH + H(+). In terms of biological role, catalyzes the conversion of quinonoid dihydrobiopterin into tetrahydrobiopterin. This is Dihydropteridine reductase (Qdpr) from Rattus norvegicus (Rat).